The chain runs to 87 residues: Small ribosomal subunit protein uS17 (87 aa).

This sequence belongs to the universal ribosomal protein uS17 family. As to quaternary structure, part of the 30S ribosomal subunit.

Its function is as follows. One of the primary rRNA binding proteins, it binds specifically to the 5'-end of 16S ribosomal RNA. This is Small ribosomal subunit protein uS17 from Staphylococcus aureus (strain Mu3 / ATCC 700698).